Reading from the N-terminus, the 515-residue chain is Maturase K (515 aa).

Belongs to the intron maturase 2 family. MatK subfamily.

The protein localises to the plastid. It localises to the chloroplast. Functionally, usually encoded in the trnK tRNA gene intron. Probably assists in splicing its own and other chloroplast group II introns. The protein is Maturase K of Pinus armandii (Chinese white pine).